The chain runs to 230 residues: Pyridoxal phosphate homeostasis protein (230 aa).

Lys36 is modified (N6-(pyridoxal phosphate)lysine).

It belongs to the pyridoxal phosphate-binding protein YggS/PROSC family.

Perhaps involved in proline biosynthesis. In terms of biological role, pyridoxal 5'-phosphate (PLP)-binding protein, which is involved in PLP homeostasis. In Pseudomonas aeruginosa (strain ATCC 15692 / DSM 22644 / CIP 104116 / JCM 14847 / LMG 12228 / 1C / PRS 101 / PAO1), this protein is Pyridoxal phosphate homeostasis protein.